Reading from the N-terminus, the 265-residue chain is Putative cysteine-rich receptor-like protein kinase At4g11521 (265 aa).

Positions 1-23 are cleaved as a signal peptide; sequence MMLNTLFLPIFLFFLITFDYVST. 2 consecutive Gnk2-homologous domains span residues 24 to 122 and 128 to 241; these read QTCF…NISF and MEPS…LYPF. N-linked (GlcNAc...) asparagine glycosylation is found at asparagine 34, asparagine 102, and asparagine 119. The N-linked (GlcNAc...) asparagine glycan is linked to asparagine 247.

This sequence belongs to the protein kinase superfamily. Ser/Thr protein kinase family. CRK subfamily.

Its subcellular location is the secreted. This is Putative cysteine-rich receptor-like protein kinase At4g11521 from Arabidopsis thaliana (Mouse-ear cress).